The chain runs to 247 residues: tRNA pseudouridine synthase A (247 aa).

Catalysis depends on Asp52, which acts as the Nucleophile. Residue Tyr113 coordinates substrate.

The protein belongs to the tRNA pseudouridine synthase TruA family. In terms of assembly, homodimer.

The catalysed reaction is uridine(38/39/40) in tRNA = pseudouridine(38/39/40) in tRNA. In terms of biological role, formation of pseudouridine at positions 38, 39 and 40 in the anticodon stem and loop of transfer RNAs. The chain is tRNA pseudouridine synthase A from Rhizobium meliloti (strain 1021) (Ensifer meliloti).